The primary structure comprises 425 residues: Glutamate-1-semialdehyde 2,1-aminomutase (425 aa).

Lysine 264 carries the N6-(pyridoxal phosphate)lysine modification.

This sequence belongs to the class-III pyridoxal-phosphate-dependent aminotransferase family. HemL subfamily. Homodimer. It depends on pyridoxal 5'-phosphate as a cofactor.

It localises to the cytoplasm. It catalyses the reaction (S)-4-amino-5-oxopentanoate = 5-aminolevulinate. Its pathway is porphyrin-containing compound metabolism; protoporphyrin-IX biosynthesis; 5-aminolevulinate from L-glutamyl-tRNA(Glu): step 2/2. This chain is Glutamate-1-semialdehyde 2,1-aminomutase, found in Hydrogenobaculum sp. (strain Y04AAS1).